Here is a 157-residue protein sequence, read N- to C-terminus: Lipoprotein signal peptidase (157 aa).

A run of 4 helical transmembrane segments spans residues 10-30, 36-56, 58-78, and 84-104; these read FIFI…KYAI, YESS…FSLL, FLEG…FIFL, and LFKA…SNIL. Residues aspartate 114 and aspartate 131 contribute to the active site. A helical transmembrane segment spans residues 123 to 143; that stretch reads DFAIFNFADVMIDVGVGVLLI.

Belongs to the peptidase A8 family.

It is found in the cell inner membrane. The enzyme catalyses Release of signal peptides from bacterial membrane prolipoproteins. Hydrolyzes -Xaa-Yaa-Zaa-|-(S,diacylglyceryl)Cys-, in which Xaa is hydrophobic (preferably Leu), and Yaa (Ala or Ser) and Zaa (Gly or Ala) have small, neutral side chains.. It functions in the pathway protein modification; lipoprotein biosynthesis (signal peptide cleavage). This protein specifically catalyzes the removal of signal peptides from prolipoproteins. The protein is Lipoprotein signal peptidase of Helicobacter acinonychis (strain Sheeba).